Here is a 454-residue protein sequence, read N- to C-terminus: Asparagine--tRNA ligase (454 aa).

This sequence belongs to the class-II aminoacyl-tRNA synthetase family. In terms of assembly, homodimer.

The protein localises to the cytoplasm. The enzyme catalyses tRNA(Asn) + L-asparagine + ATP = L-asparaginyl-tRNA(Asn) + AMP + diphosphate + H(+). The polypeptide is Asparagine--tRNA ligase (Ureaplasma parvum serovar 3 (strain ATCC 27815 / 27 / NCTC 11736)).